The sequence spans 209 residues: uncharacterized protein (209 aa).

Positions 39-75 form a coiled coil; it reads VSFENFMERYDTMEKNIQDLQNKYEEMANNLVAVMAD. The interval 103-131 is disordered; that stretch reads TMKDATSLPPPNPNNEQSVFTNGSPTSGK. The span at 116-129 shows a compositional bias: polar residues; it reads NNEQSVFTNGSPTS.

This sequence belongs to the asfivirus K205R family.

It localises to the host cytoplasm. In terms of biological role, induces host endoplasmic reticulum stress and consequently activates autophagy and NF-kappa-B signaling pathway. In turn, may induce autophagy-mediated STING1 degradation and innate immune evasion. This is an uncharacterized protein from Ornithodoros (relapsing fever ticks).